The chain runs to 98 residues: Integration host factor subunit beta (98 aa).

It belongs to the bacterial histone-like protein family. In terms of assembly, heterodimer of an alpha and a beta chain.

Its function is as follows. This protein is one of the two subunits of integration host factor, a specific DNA-binding protein that functions in genetic recombination as well as in transcriptional and translational control. The protein is Integration host factor subunit beta of Pseudomonas entomophila (strain L48).